A 156-amino-acid chain; its full sequence is ATP synthase subunit b (156 aa).

Residues 11-31 (AIAFVLFVMFCMKFVWPPIMA) form a helical membrane-spanning segment.

The protein belongs to the ATPase B chain family. F-type ATPases have 2 components, F(1) - the catalytic core - and F(0) - the membrane proton channel. F(1) has five subunits: alpha(3), beta(3), gamma(1), delta(1), epsilon(1). F(0) has three main subunits: a(1), b(2) and c(10-14). The alpha and beta chains form an alternating ring which encloses part of the gamma chain. F(1) is attached to F(0) by a central stalk formed by the gamma and epsilon chains, while a peripheral stalk is formed by the delta and b chains.

The protein resides in the cell inner membrane. In terms of biological role, f(1)F(0) ATP synthase produces ATP from ADP in the presence of a proton or sodium gradient. F-type ATPases consist of two structural domains, F(1) containing the extramembraneous catalytic core and F(0) containing the membrane proton channel, linked together by a central stalk and a peripheral stalk. During catalysis, ATP synthesis in the catalytic domain of F(1) is coupled via a rotary mechanism of the central stalk subunits to proton translocation. Functionally, component of the F(0) channel, it forms part of the peripheral stalk, linking F(1) to F(0). This Photorhabdus laumondii subsp. laumondii (strain DSM 15139 / CIP 105565 / TT01) (Photorhabdus luminescens subsp. laumondii) protein is ATP synthase subunit b.